The following is a 523-amino-acid chain: Peptide chain release factor 3 (523 aa).

Residues 8–275 enclose the tr-type G domain; sequence KKRRTFAIIS…TFLEYAPEPH (268 aa). GTP-binding positions include 17 to 24, 85 to 89, and 139 to 142; these read SHPDAGKT, DTPGH, and NKLD.

The protein belongs to the TRAFAC class translation factor GTPase superfamily. Classic translation factor GTPase family. PrfC subfamily.

It is found in the cytoplasm. Increases the formation of ribosomal termination complexes and stimulates activities of RF-1 and RF-2. It binds guanine nucleotides and has strong preference for UGA stop codons. It may interact directly with the ribosome. The stimulation of RF-1 and RF-2 is significantly reduced by GTP and GDP, but not by GMP. The chain is Peptide chain release factor 3 (prfC) from Lactococcus lactis subsp. lactis (strain IL1403) (Streptococcus lactis).